The following is a 215-amino-acid chain: MMEETTKIPQATAKRLPLYHRYLKYLDESGKERVSSAELSEAVKVDSATIRRDFSYFGALGKKGYGYNVSYILDFFSKTLSQDKQTNVALIGVGNLGTALLHYNFMKNNNIKIVAAFDVDPAKVGSVQQDIPIYHLNDMEEIVRENGVEVVILTVPADEAQVTVDRLIEADVKGILNFTPARISVPKQVRVHHIDLTTELQTLIYFLENYPAKTE.

The H-T-H motif DNA-binding region spans 18-57; it reads LYHRYLKYLDESGKERVSSAELSEAVKVDSATIRRDFSYF. Residue 92–97 participates in NAD(+) binding; sequence GVGNLG.

This sequence belongs to the transcriptional regulatory Rex family. As to quaternary structure, homodimer.

The protein resides in the cytoplasm. In terms of biological role, modulates transcription in response to changes in cellular NADH/NAD(+) redox state. This chain is Redox-sensing transcriptional repressor Rex, found in Listeria innocua serovar 6a (strain ATCC BAA-680 / CLIP 11262).